The following is a 941-amino-acid chain: Pre-mRNA-processing factor 6 (941 aa).

The tract at residues 1-79 (MNKKKKPFLG…DEDLNDTNYD (79 aa)) is disordered. Over residues 39-65 (DANDPVDDRHAPPGKRTVGDQMKKNQA) the composition is skewed to basic and acidic residues. Residues 66 to 78 (ADDDDEDLNDTNY) show a composition bias toward acidic residues. Serine 143 is modified (phosphoserine). 3 positions are modified to phosphothreonine: threonine 180, threonine 266, and threonine 275. Serine 279 is modified (phosphoserine). HAT repeat units follow at residues 384 to 416 (TDIR…LEEP), 418 to 444 (DARI…ARLE), 445 to 476 (TYEN…LEEA), 554 to 586 (NALE…FEKN), 588 to 620 (GTRE…SKWL), 622 to 654 (GDVP…LESE), 689 to 721 (GNIS…IEEQ), 723 to 755 (ELME…LEEK), and 855 to 887 (RKIT…FELQ).

In terms of assembly, identified in the spliceosome B complex. Identified in the spliceosome C complex. Associates with the U5 snRNP particle. Component of the U4/U6-U5 tri-snRNP complex composed of the U4, U6 and U5 snRNAs and at least PRPF3, PRPF4, PRPF6, PRPF8, PRPF31, SNRNP200, TXNL4A, SNRNP40, DDX23, CD2BP2, PPIH, SNU13, EFTUD2, SART1 and USP39, LSm proteins LSm2-8 and Sm proteins. Interacts with ARAF1. Interacts with AR and NR3C1, but not ESR1, independently of the presence of hormones. Interacts with USH1G. Post-translationally, phosphorylated by PRP4K during spliceosome assembly.

The protein resides in the nucleus. It localises to the nucleoplasm. The protein localises to the nucleus speckle. Involved in pre-mRNA splicing as component of the U4/U6-U5 tri-snRNP complex, one of the building blocks of the spliceosome. Enhances dihydrotestosterone-induced transactivation activity of AR, as well as dexamethasone-induced transactivation activity of NR3C1, but does not affect estrogen-induced transactivation. The protein is Pre-mRNA-processing factor 6 (Prpf6) of Mus musculus (Mouse).